Consider the following 149-residue polypeptide: Large ribosomal subunit protein bL9 (149 aa).

It belongs to the bacterial ribosomal protein bL9 family.

Functionally, binds to the 23S rRNA. The protein is Large ribosomal subunit protein bL9 of Edwardsiella ictaluri (strain 93-146).